Here is a 637-residue protein sequence, read N- to C-terminus: MNNQGRSILAWATLFIFVILLFNVFQSDSLLGGRNNITFSDFLTRVDEKTVNSVKIQGRVIEGTSNDGSTFNTYAPDYPDLVNRLTSNDVNIEVVPLETRMNTFLGFLISWFPMLLLIGVWVFFMRQMHGGGKAMGFGKSKARLLSDKGPKITFKDVAGIDEAKEELTEIVDFLRDPSKFQKLGGKIPKGCLLIGPPGTGKTLLAKAIAGEANVPFFSISGSDFVEMFVGVGASRVRDMFEQGKRNAPCIIFIDEIDAVGRHRGIGMGGGNDEREQTLNQMLVEMDGFEANEGVVIIAATNRPDVLDRALLRPGRFDRQIAVANPDINGREQILKVHLKKIKYNSTVLARIIARGTPGFSGAELANLVNEAALIAARLGKKEVDMHDMEEAKDKVLMGVARRSIAMSEKEKRLTAYHEGGHALVGLYCPAASPIHKATIIPRGNALGMVQRLPETDEYSQNREQMESSIAVYMAGRVAEEIIFGRNKVTSGASSDIKGATNIARAMVTKAGLSDLIGPIFHGSSGDDMYGRQPNNETSEATAELIDAEVKRIITQGYEFAKDILTKHIDQLHTLANALIEYETLSGQQIKNLLSGRALDSEEENKFPFNDSSTIKIDKEKSPEKTKTTKAKKENYAS.

Topologically, residues 1-6 (MNNQGR) are cytoplasmic. Residues 7-27 (SILAWATLFIFVILLFNVFQS) traverse the membrane as a helical segment. Topologically, residues 28–103 (DSLLGGRNNI…VVPLETRMNT (76 aa)) are periplasmic. A helical transmembrane segment spans residues 104–124 (FLGFLISWFPMLLLIGVWVFF). Residues 125-637 (MRQMHGGGKA…TKAKKENYAS (513 aa)) are Cytoplasmic-facing. 195 to 202 (GPPGTGKT) contributes to the ATP binding site. H417 is a binding site for Zn(2+). The active site involves E418. Zn(2+)-binding residues include H421 and D495. Residues 603–637 (ENKFPFNDSSTIKIDKEKSPEKTKTTKAKKENYAS) are disordered. Positions 615-637 (KIDKEKSPEKTKTTKAKKENYAS) are enriched in basic and acidic residues.

The protein in the central section; belongs to the AAA ATPase family. It in the C-terminal section; belongs to the peptidase M41 family. As to quaternary structure, homohexamer. Requires Zn(2+) as cofactor.

The protein localises to the cell inner membrane. Acts as a processive, ATP-dependent zinc metallopeptidase for both cytoplasmic and membrane proteins. Plays a role in the quality control of integral membrane proteins. The sequence is that of ATP-dependent zinc metalloprotease FtsH from Rickettsia conorii (strain ATCC VR-613 / Malish 7).